A 362-amino-acid chain; its full sequence is MVRSLIRRVLGRQDVGVSNAPLELPPSDSRERARAMVMGLQDQICAGLEALDGEGRFVEESWVRHEGGGGRSRVMREGRVFEQGGVNFSEVQGEELPPSILKQRPEAKGHPWFATGTSMVLHPRNPYIPTVHLNYRYFEAGPVWWFGGGADLTPYYPFLDDARHFHRTHQAACDSVHPDLHKVFKPWCDEYFYLKHRGETRGVGGIFYDYQDANGTLYKGQDPSGPAAQVSASLGARPLSWEQLFSLGQANGRAFLPAYAPIVEKRHPMAYGDRERDFQLYRRGRYVEFNLVWDRGTIFGLQTNGRTESILMSLPPLVRWEYGYTAEAGSREALLTELFTKPQDWLGDASLDERCRPHGAIN.

Serine 118 serves as a coordination point for substrate. Residues histidine 122 and histidine 132 each contribute to the a divalent metal cation site. Histidine 132 serves as the catalytic Proton donor. 134-136 contributes to the substrate binding site; sequence NYR. Positions 166 and 196 each coordinate a divalent metal cation. The tract at residues 286 to 321 is important for dimerization; it reads YVEFNLVWDRGTIFGLQTNGRTESILMSLPPLVRWE.

It belongs to the aerobic coproporphyrinogen-III oxidase family. Homodimer. The cofactor is a divalent metal cation.

It is found in the cytoplasm. It carries out the reaction coproporphyrinogen III + O2 + 2 H(+) = protoporphyrinogen IX + 2 CO2 + 2 H2O. The protein operates within porphyrin-containing compound metabolism; protoporphyrin-IX biosynthesis; protoporphyrinogen-IX from coproporphyrinogen-III (O2 route): step 1/1. Its function is as follows. Involved in the heme and chlorophyll biosynthesis. Catalyzes the aerobic oxidative decarboxylation of propionate groups of rings A and B of coproporphyrinogen-III to yield the vinyl groups in protoporphyrinogen-IX. This is Oxygen-dependent coproporphyrinogen-III oxidase from Synechococcus sp. (strain CC9605).